We begin with the raw amino-acid sequence, 472 residues long: 3-isopropylmalate dehydratase large subunit (472 aa).

Positions 289–312 (TWGTNPAQGTGVSQVVPSPDDAKD) are disordered. Residues 290-304 (WGTNPAQGTGVSQVV) show a composition bias toward polar residues. Cys347, Cys407, and Cys410 together coordinate [4Fe-4S] cluster.

This sequence belongs to the aconitase/IPM isomerase family. LeuC type 1 subfamily. Heterodimer of LeuC and LeuD. Requires [4Fe-4S] cluster as cofactor.

The enzyme catalyses (2R,3S)-3-isopropylmalate = (2S)-2-isopropylmalate. It participates in amino-acid biosynthesis; L-leucine biosynthesis; L-leucine from 3-methyl-2-oxobutanoate: step 2/4. In terms of biological role, catalyzes the isomerization between 2-isopropylmalate and 3-isopropylmalate, via the formation of 2-isopropylmaleate. In Halalkalibacterium halodurans (strain ATCC BAA-125 / DSM 18197 / FERM 7344 / JCM 9153 / C-125) (Bacillus halodurans), this protein is 3-isopropylmalate dehydratase large subunit.